The sequence spans 591 residues: ATPase family AAA domain-containing protein 3A (591 aa).

The disordered stretch occupies residues 1-52 (MSWLFGIKGPKGEGTGPPLPLPPAQPGAEGGGDRGAGDRPSPKDKWSNFDPT). At serine 2 the chain carries N-acetylserine. Residues 2-49 (SWLFGIKGPKGEGTGPPLPLPPAQPGAEGGGDRGAGDRPSPKDKWSNF) are required for interaction with the inner surface of the mitochondrial outer membrane. The Mitochondrial intermembrane portion of the chain corresponds to 2-245 (SWLFGIKGPK…FRAFVTDWDK (244 aa)). Residues 31-47 (GGDRGAGDRPSPKDKWS) show a composition bias toward basic and acidic residues. Residues 55 to 216 (ERAAKAAREL…REQIRLKAAE (162 aa)) adopt a coiled-coil conformation. The helical transmembrane segment at 246 to 263 (VTATVAGLTLLAVGVYSA) threads the bilayer. Over 264-586 (KNATSVAGRY…DSQTNKPPHP (323 aa)) the chain is Mitochondrial matrix. The tract at residues 289–304 (RISVLEALRHPIQVSR) is S100B-binding. 351–358 (GPPGTGKT) lines the ATP pocket. Lysine 490 is subject to N6-acetyllysine; alternate. At lysine 490 the chain carries N6-succinyllysine; alternate. 2 positions are modified to N6-acetyllysine: lysine 494 and lysine 512. A disordered region spans residues 572-591 (KVERPDSQTNKPPHPSLLSC).

Belongs to the AAA ATPase family. As to quaternary structure, can form homooligomers. Homodimer formation at the N-terminus may be regulated by ATP and is required for the interaction with the inner surface of the mitochondrial outer membrane and correct mitochondrial homeostasis. Interacts with components of the mitochondrial ribosome and with other proteins involved in mitochondrial RNA metabolism. May also interact with protein involved in lipid metabolism, including STARD9. May interact with FAM210A. Interacts with GADD45GIP1. Interacts with S100B in a Ca(+2)- and Zn(+2)-dependent manner; this interaction probably occurs in the cytosol prior to mitochondrial targeting. S100B could assist ATAD3A cytoplasmic processing, preventing aggregation and favoring mitochondrial localization. Interacts with HSP60/HSPD1. Interacts with CLPB. Interacts with EIF2AK3/PERK; ATAD3A and EIF2S1/eIF-2-alpha occupy a common binding site within the cytoplasmic loop of EIF2AK3/PERK, leading to prevent EIF2AK3/PERK association with its substrate EIF2S1/eIF-2-alpha. In terms of tissue distribution, expressed in heart, spleen, kidney, liver and at smaller levels, in lung and muscle (at protein level).

The protein localises to the mitochondrion inner membrane. Its subcellular location is the mitochondrion matrix. The protein resides in the mitochondrion nucleoid. The catalysed reaction is ATP + H2O = ADP + phosphate + H(+). Essential for mitochondrial network organization, mitochondrial metabolism and cell growth at organism and cellular level. May play an important role in mitochondrial protein synthesis. May also participate in mitochondrial DNA replication. May bind to mitochondrial DNA D-loops and contribute to nucleoid stability. Required for enhanced channeling of cholesterol for hormone-dependent steroidogenesis. Involved in mitochondrial-mediated antiviral innate immunity. Required to protect mitochondria from the PERK-mediated unfolded protein response: specifically inhibits the activity of EIF2AK3/PERK at mitochondria-endoplasmic reticulum contact sites, thereby providing a safe haven for mitochondrial protein translation during endoplasmic reticulum stress. Ability to inhibit EIF2AK3/PERK is independent of its ATPase activity. Also involved in the mitochondrial DNA damage response by promoting signaling between damaged genomes and the mitochondrial membrane, leading to activation of the integrated stress response (ISR). The sequence is that of ATPase family AAA domain-containing protein 3A (Atad3a) from Mus musculus (Mouse).